Here is a 577-residue protein sequence, read N- to C-terminus: MDRAVSQVALENDEREAKNTWRLIFRIAILFLTVVTLAISVASLLYSMGASTPSDLVGIPTRISRAEEKITSTLGSNQDVVDRIYKQVALESPLALLNTETTIMNAITSLSYQINGAANNSGWGAPIHDPDYIGGIGKELIVDDASDVTSFYPSAFQEHLNFIPAPTTGSGCTRIPSFDMSATHYCYTHNVILSGCRDHSHSYQYLALGVLRTSATGRVFFSTLRSINLDDTQNRKSCSVSATPLGCDMLCSKATETEEEDYNSAVPTRMVHGRLGFDGQYHEKDLDVTTLFGDWVANYPGVGGGSFIDSRVWFSVYGGLKPNSPSDTVQEGKYVIYKRYNDTCPDEQDYQIRMAKSSYKPGRFGGKRIQQAILSIKVSTSLGEDPVLTVPPNTVTLMGAEGRILTVGTSHFLYQRGSSYFSPALLYPMTVSNKTATLHSPYTFNAFTRPGSIPCQASARCPNSCVTGVYTDPYPLIFYRNHTLRGVFGTMLDGEQARLNPASAVFDSTSRSRITRVSSSSIKAAYTTSTCFKVVKTNKTYCLSIAEISNTLFGEFRIVPLLVEILKDDGVREARSG.

Topologically, residues 1 to 26 are intravirion; sequence MDRAVSQVALENDEREAKNTWRLIFR. The helical transmembrane segment at 27–47 threads the bilayer; it reads IAILFLTVVTLAISVASLLYS. At 48–577 the chain is on the virion surface side; sequence MGASTPSDLV…DDGVREARSG (530 aa). The important for interaction with fusion/F protein stretch occupies residues 124–152; it reads GAPIHDPDYIGGIGKELIVDDASDVTSFY. N-linked (GlcNAc...) asparagine; by host glycans are attached at residues Asn-341, Asn-433, Asn-481, and Asn-538.

This sequence belongs to the paramyxoviruses hemagglutinin-neuraminidase family. In terms of assembly, homotetramer; composed of disulfide-linked homodimers. Interacts with F protein trimer. Interacts with host CG-1B; this interaction inhibits viral adsorption and replication rather than internalization.

The protein resides in the virion membrane. Its subcellular location is the host cell membrane. It catalyses the reaction Hydrolysis of alpha-(2-&gt;3)-, alpha-(2-&gt;6)-, alpha-(2-&gt;8)- glycosidic linkages of terminal sialic acid residues in oligosaccharides, glycoproteins, glycolipids, colominic acid and synthetic substrates.. In terms of biological role, mediates the viral entry into the host cell together with fusion/F protein. Attaches the virus to sialic acid-containing cell receptors and thereby initiates infection. Binding of HN protein to the receptor induces a conformational change that allows the F protein to trigger virion/cell membranes fusion. Neuraminidase activity ensures the efficient spread of the virus by dissociating the mature virions from the neuraminic acid containing glycoproteins. The protein is Hemagglutinin-neuraminidase (HN) of Gallus gallus (Chicken).